The chain runs to 218 residues: Tubulin polymerization-promoting protein (218 aa).

The tract at residues 1-46 (MADSKAKPAKAANKTPPKSPGDPARAAKRLSLESEGANEGATAAPE) is disordered. A mediates interaction with LIMK1 region spans residues 1–115 (MADSKAKPAK…SCRTITFEQF (115 aa)). Thr-15 carries the phosphothreonine modification. A phosphoserine mark is found at Ser-19, Ser-31, and Ser-34. Phosphothreonine is present on Thr-42. Zn(2+) contacts are provided by His-60, His-71, Cys-79, and Cys-82. Residue Thr-91 is modified to Phosphothreonine. Ser-106 carries the phosphoserine modification. An O-linked (GlcNAc) serine glycan is attached at Ser-151. 2 positions are modified to phosphoserine: Ser-158 and Ser-159. A disordered region spans residues 166-192 (TDTSKFTGSHKERFDQSGKGKGKAGRV). Basic and acidic residues predominate over residues 174-183 (SHKERFDQSG).

Belongs to the TPPP family. In terms of assembly, homodimer. Binds tubulin; binding is inhibited by GTP. Interacts with MAPK1. Interacts with GAPDH; the interaction is direct. Interacts with LIMK1 (via the PDZ domain); the interaction is direct. Interacts with LIMK2. Interacts with HDAC6; thereby inhibiting the tubulin deacetylase activity of HDAC6. Interacts with aggregated SNCA; may have a pro-aggregatory role in synucleinopathies. Interacts with DYNLL1. Interacts (via C-terminus) with S100A2, S100A6 and S100B; these interactions inhibit TPPP dimerization. It depends on Mg(2+) as a cofactor. In terms of processing, phosphorylated by LIMK1 on serine residues; phosphorylation may alter the tubulin polymerization activity. Phosphorylation by LIMK2, but not LIMK1, regulates astral microtubule organization at early stage of mitosis. Phosphorylation by ROCK1 at Ser-31, Ser-106 and Ser-158 inhibits interaction with HDAC6, resulting in decreased acetylation of tubulin, increased cell motility and entry into S-phase. Phosphorylation by CDK1 inhibits the microtubule polymerizing activity. Post-translationally, degraded by the proteasome; zinc-binding inhibits degradation by the proteasome. Widely expressed with higher expression in brain (at protein level).

The protein localises to the golgi outpost. Its subcellular location is the cytoplasm. It localises to the cytoskeleton. The protein resides in the microtubule organizing center. It is found in the nucleus. The protein localises to the spindle. The enzyme catalyses GTP + H2O = GDP + phosphate + H(+). Functionally, regulator of microtubule dynamics that plays a key role in myelination by promoting elongation of the myelin sheath. Acts as a microtubule nucleation factor in oligodendrocytes: specifically localizes to the postsynaptic Golgi apparatus region, also named Golgi outpost, and promotes microtubule nucleation, an important step for elongation of the myelin sheath. Required for both uniform polarized growth of distal microtubules as well as directing the branching of proximal processes. Shows magnesium-dependent GTPase activity; the role of the GTPase activity is unclear. In addition to microtubule nucleation activity, also involved in microtubule bundling and stabilization of existing microtubules, thereby maintaining the integrity of the microtubule network. Regulates microtubule dynamics by promoting tubulin acetylation: acts by inhibiting the tubulin deacetylase activity of HDAC6. Also regulates cell migration: phosphorylation by ROCK1 inhibits interaction with HDAC6, resulting in decreased acetylation of tubulin and increased cell motility. Plays a role in cell proliferation by regulating the G1/S-phase transition. Involved in astral microtubule organization and mitotic spindle orientation during early stage of mitosis; this process is regulated by phosphorylation by LIMK2. The polypeptide is Tubulin polymerization-promoting protein (Mus musculus (Mouse)).